The sequence spans 729 residues: MLYKGDTLYLDWLEDGIAELVFDAPGSVNKLDTATVASLGQALEVLEKQHDLKGLLLRSNKAAFIVGADITEFLSLFLVPEEQLSQWLHFANSVFNRLEDLPVPTLAAVNGYALGGGCECVLATDYRLATPDLRIGLPETKLGIMPGFGGSVRLPRMLGADSALEIIAAGKDVGAEHALKIGLVDGVVKQEKLIEGAIAVLRQAITGDLDWRAKRQPKLEPLKLSKIEAAMSFTIAKGMVAQTAGKHYPAPMTAVKTIEAAARFGREEALNLENKSFVPLAHTNEARALVGIFLNDQYVKGKAKKLTKDIETPKQAAVLGAGIMGGGIAYQSAWKGVPVIMKDINDKSLNLGMTEAAKLLNKQLERGKIDGLKLAGVISTIHPTLDYAGFDRVDAVVEAVVENPKVKKAVLAETEQKVRPETVLASNTSTIPIGELASALERPENFCGMHFFNPVHRMPLVEIIRGEKSSDETIAKVVAWASKMGKTPIVVNDCPGFFVNRVLFPYFAGFSQLLRDGADFRKVDKVMEKQFGWPMGPAYLLDVVGIDTAHHAQAVMAAGFPQRMQKEYRDAIDALFDASRFGQKNGLGFWRYKEDSKGKPKKEEDAAVDDLLASVSQTKRDFSDDEIIARMMIPMINEVVRCLEEGIIASPAEADMALVYGLGFPPFHGGAFRWLDTQGSAKYLDMAQQYQHLGPLYEVPEGLRNKARHNEPYYPPVEPARPVGSLKTA.

The tract at residues 1 to 189 (MLYKGDTLYL…KIGLVDGVVK (189 aa)) is enoyl-CoA hydratase/isomerase. D296 serves as a coordination point for substrate. The 3-hydroxyacyl-CoA dehydrogenase stretch occupies residues 311–729 (ETPKQAAVLG…ARPVGSLKTA (419 aa)). Residues M324, D343, 400–402 (VVE), K407, and S429 each bind NAD(+). H450 functions as the For 3-hydroxyacyl-CoA dehydrogenase activity in the catalytic mechanism. N453 contributes to the NAD(+) binding site. Substrate-binding residues include N500 and Y660. A disordered region spans residues 708–729 (RHNEPYYPPVEPARPVGSLKTA).

This sequence in the N-terminal section; belongs to the enoyl-CoA hydratase/isomerase family. It in the C-terminal section; belongs to the 3-hydroxyacyl-CoA dehydrogenase family. As to quaternary structure, heterotetramer of two alpha chains (FadB) and two beta chains (FadA).

The enzyme catalyses a (3S)-3-hydroxyacyl-CoA + NAD(+) = a 3-oxoacyl-CoA + NADH + H(+). It catalyses the reaction a (3S)-3-hydroxyacyl-CoA = a (2E)-enoyl-CoA + H2O. It carries out the reaction a 4-saturated-(3S)-3-hydroxyacyl-CoA = a (3E)-enoyl-CoA + H2O. The catalysed reaction is (3S)-3-hydroxybutanoyl-CoA = (3R)-3-hydroxybutanoyl-CoA. The enzyme catalyses a (3Z)-enoyl-CoA = a 4-saturated (2E)-enoyl-CoA. It catalyses the reaction a (3E)-enoyl-CoA = a 4-saturated (2E)-enoyl-CoA. It functions in the pathway lipid metabolism; fatty acid beta-oxidation. Involved in the aerobic and anaerobic degradation of long-chain fatty acids via beta-oxidation cycle. Catalyzes the formation of 3-oxoacyl-CoA from enoyl-CoA via L-3-hydroxyacyl-CoA. It can also use D-3-hydroxyacyl-CoA and cis-3-enoyl-CoA as substrate. The polypeptide is Fatty acid oxidation complex subunit alpha (Salmonella enteritidis PT4 (strain P125109)).